A 532-amino-acid chain; its full sequence is Light-independent protochlorophyllide reductase subunit B (532 aa).

Asp-36 contributes to the [4Fe-4S] cluster binding site. Asp-282 functions as the Proton donor in the catalytic mechanism. 417 to 418 (GL) provides a ligand contact to substrate.

The protein belongs to the ChlB/BchB/BchZ family. In terms of assembly, protochlorophyllide reductase is composed of three subunits; BchL, BchN and BchB. Forms a heterotetramer of two BchB and two BchN subunits. Requires [4Fe-4S] cluster as cofactor.

It carries out the reaction chlorophyllide a + oxidized 2[4Fe-4S]-[ferredoxin] + 2 ADP + 2 phosphate = protochlorophyllide a + reduced 2[4Fe-4S]-[ferredoxin] + 2 ATP + 2 H2O. Its pathway is porphyrin-containing compound metabolism; bacteriochlorophyll biosynthesis (light-independent). In terms of biological role, component of the dark-operative protochlorophyllide reductase (DPOR) that uses Mg-ATP and reduced ferredoxin to reduce ring D of protochlorophyllide (Pchlide) to form chlorophyllide a (Chlide). This reaction is light-independent. The NB-protein (BchN-BchB) is the catalytic component of the complex. The sequence is that of Light-independent protochlorophyllide reductase subunit B from Methylobacterium radiotolerans (strain ATCC 27329 / DSM 1819 / JCM 2831 / NBRC 15690 / NCIMB 10815 / 0-1).